The primary structure comprises 225 residues: Cold-regulated 413 inner membrane protein 1, chloroplastic (225 aa).

Residues M1–Y76 constitute a chloroplast transit peptide. A77 is a topological domain (stromal). The chain crosses the membrane as a helical span at residues A78–L98. Topologically, residues A99–T102 are chloroplast intermembrane. The chain crosses the membrane as a helical span at residues G103–A123. Residues W124–E128 lie on the Stromal side of the membrane. A helical transmembrane segment spans residues Y129 to E149. At L150–E151 the chain is on the chloroplast intermembrane side. Residues L152–G172 form a helical membrane-spanning segment. Over K173–E175 the chain is Stromal. A helical transmembrane segment spans residues G176–G196. The Chloroplast intermembrane segment spans residues S197–K204. A helical membrane pass occupies residues G205–L225.

It belongs to the Cold-regulated 413 protein family.

It localises to the plastid. It is found in the chloroplast inner membrane. This chain is Cold-regulated 413 inner membrane protein 1, chloroplastic (COR413IM1), found in Arabidopsis thaliana (Mouse-ear cress).